A 307-amino-acid polypeptide reads, in one-letter code: UDP-3-O-acyl-N-acetylglucosamine deacetylase (307 aa).

Residues His78, His241, and Asp245 each contribute to the Zn(2+) site. Catalysis depends on His268, which acts as the Proton donor.

Belongs to the LpxC family. Zn(2+) serves as cofactor.

It carries out the reaction a UDP-3-O-[(3R)-3-hydroxyacyl]-N-acetyl-alpha-D-glucosamine + H2O = a UDP-3-O-[(3R)-3-hydroxyacyl]-alpha-D-glucosamine + acetate. Its pathway is glycolipid biosynthesis; lipid IV(A) biosynthesis; lipid IV(A) from (3R)-3-hydroxytetradecanoyl-[acyl-carrier-protein] and UDP-N-acetyl-alpha-D-glucosamine: step 2/6. Its function is as follows. Catalyzes the hydrolysis of UDP-3-O-myristoyl-N-acetylglucosamine to form UDP-3-O-myristoylglucosamine and acetate, the committed step in lipid A biosynthesis. This is UDP-3-O-acyl-N-acetylglucosamine deacetylase from Verminephrobacter eiseniae (strain EF01-2).